Here is a 421-residue protein sequence, read N- to C-terminus: E3 ubiquitin protein ligase DRIP1 (421 aa).

The segment at 16 to 57 (CSICDNILRDATTISECLHTFCRKCIYEKITEDEIETCPVCN) adopts an RING-type zinc-finger fold. Polar residues-rich tracts occupy residues 106–121 (ISSLVVSTPMVSAQAG) and 157–172 (ESTSSPDTLNKFTQNK). Disordered regions lie at residues 106–198 (ISSL…WDSK) and 216–307 (PLKS…QERR). The segment covering 178-198 (SCKESISNKENKDGDEPWDSK) has biased composition (basic and acidic residues). Positions 218–227 (KSSASQGSGS) are enriched in low complexity. A compositionally biased stretch (basic residues) spans 244–253 (TKTKNKKRKC). The segment covering 262–271 (NGDPTTSETV) has biased composition (polar residues). The span at 274-284 (KRMRTTQRKRS) shows a compositional bias: basic residues. Residues 285-294 (ATTLGDSRNL) are compositionally biased toward polar residues.

Interacts with DREB2A. In terms of processing, autoubiquitinated. In terms of tissue distribution, expressed in roots, leaves and flowers.

It localises to the nucleus. It carries out the reaction S-ubiquitinyl-[E2 ubiquitin-conjugating enzyme]-L-cysteine + [acceptor protein]-L-lysine = [E2 ubiquitin-conjugating enzyme]-L-cysteine + N(6)-ubiquitinyl-[acceptor protein]-L-lysine.. It functions in the pathway protein modification; protein ubiquitination. E3 ubiquitin-protein ligase that acts as a negative regulator of the response to water stress. Mediates ubiquitination and subsequent proteasomal degradation of the drought-induced transcriptional activator DREB2A. Functionally redundant with DRIP2. The polypeptide is E3 ubiquitin protein ligase DRIP1 (DRIP1) (Arabidopsis thaliana (Mouse-ear cress)).